Consider the following 399-residue polypeptide: Alpha-tubulin N-acetyltransferase (399 aa).

In terms of domain architecture, N-acetyltransferase spans 1 to 178 (MEFNFIINKL…NNFVVFDQYF (178 aa)). Residues 112-125 (FYVHESCQRQGYGK) and 148-157 (SPKLIAFLKK) each bind acetyl-CoA. Over residues 183-193 (SSQNKQNQNTR) the composition is skewed to polar residues. Residues 183–223 (SSQNKQNQNTRSYSQPYSDYSSQIPTNYPQQQQQQSNSKSY) are disordered. A compositionally biased stretch (low complexity) spans 194 to 223 (SYSQPYSDYSSQIPTNYPQQQQQQSNSKSY).

Belongs to the acetyltransferase ATAT1 family.

It catalyses the reaction L-lysyl-[alpha-tubulin] + acetyl-CoA = N(6)-acetyl-L-lysyl-[alpha-tubulin] + CoA + H(+). Functionally, specifically acetylates 'Lys-40' in alpha-tubulin on the lumenal side of microtubules. Promotes microtubule destabilization and accelerates microtubule dynamics; this activity may be independent of acetylation activity. Acetylates alpha-tubulin with a slow enzymatic rate, due to a catalytic site that is not optimized for acetyl transfer. Enters the microtubule through each end and diffuses quickly throughout the lumen of microtubules. Acetylates only long/old microtubules because of its slow acetylation rate since it does not have time to act on dynamically unstable microtubules before the enzyme is released. In Tetrahymena thermophila (strain SB210), this protein is Alpha-tubulin N-acetyltransferase.